The chain runs to 153 residues: Regulatory protein RecX (153 aa).

Belongs to the RecX family.

The protein localises to the cytoplasm. In terms of biological role, modulates RecA activity. The polypeptide is Regulatory protein RecX (Syntrophotalea carbinolica (strain DSM 2380 / NBRC 103641 / GraBd1) (Pelobacter carbinolicus)).